Consider the following 488-residue polypeptide: Cysteine--tRNA ligase (488 aa).

Cys-28 serves as a coordination point for Zn(2+). The 'HIGH' region motif lies at 30 to 40; that stretch reads PTVYDDAHLGH. Residues Cys-209, His-239, and Glu-243 each coordinate Zn(2+). The short motif at 271–275 is the 'KMSKS' region element; sequence KMSKS. Lys-274 is a binding site for ATP.

This sequence belongs to the class-I aminoacyl-tRNA synthetase family. Monomer. It depends on Zn(2+) as a cofactor.

The protein localises to the cytoplasm. The enzyme catalyses tRNA(Cys) + L-cysteine + ATP = L-cysteinyl-tRNA(Cys) + AMP + diphosphate. The polypeptide is Cysteine--tRNA ligase (Helicobacter hepaticus (strain ATCC 51449 / 3B1)).